The primary structure comprises 1062 residues: 3-hydroxy-3-methylglutaryl-coenzyme A reductase 2 (1062 aa).

Residues 1 to 34 (MAPTNTKDSDTPGWLHRHGTSVLGSVARQACKQP) lie on the Cytoplasmic side of the membrane. The helical transmembrane segment at 35–55 (IYTLVITALLATMTYTSLLEG) threads the bilayer. Topologically, residues 56–230 (SLYNANLTRL…SFVGLIKHAQ (175 aa)) are lumenal. The N-linked (GlcNAc...) asparagine glycan is linked to Asn61. The chain crosses the membrane as a helical span at residues 231–251 (IIDIIIMLLAYLAMHLTFLSL). The SSD domain occupies 233-403 (DIIIMLLAYL…FTFYISVLCV (171 aa)). Residues 252-261 (FMSMRQLGSR) lie on the Cytoplasmic side of the membrane. The helical transmembrane segment at 262–282 (FWLAYSVLLSGFFSLFFGLKV) threads the bilayer. The Lumenal segment spans residues 283-287 (TTSSG). A helical transmembrane segment spans residues 288 to 308 (VSTSMITLSECLPILVIIVGF). At 309–355 (EKPIRLTRAVLRAATESYLPAKPMARRSTPEAIEVAIMREGWRIVRD) the chain is on the cytoplasmic side. A helical transmembrane segment spans residues 356-375 (YAIEIAILAAGATSRVQGAL). At 376 to 377 (PQ) the chain is on the lumenal side. A helical membrane pass occupies residues 378 to 398 (FCFLAAWILLFDSLLLFTFYI). Topologically, residues 399-450 (SVLCVKLEITRIRKHVEPRRALEDDDISTGNQDFDSRVFGCKVKAANISRFK) are cytoplasmic. Residues 451 to 471 (FLMVGGFVLFNVLQLSSLTYG) traverse the membrane as a helical segment. The Lumenal segment spans residues 472–564 (NVRVSDWMPY…GCVLAWLEDP (93 aa)). An N-linked (GlcNAc...) asparagine glycan is attached at Asn484. A helical transmembrane segment spans residues 565–585 (VISKWVIAALFLSLVLNSYLM). The Cytoplasmic segment spans residues 586–1062 (KAARWNLRQS…NRSKVAAKTG (477 aa)). Catalysis depends on Glu744, which acts as the Charge relay system. 750–756 (SASRGCK) lines the CoA pocket. NADP(+)-binding positions include 811–813 (SRF) and 838–846 (DAMGMNMIS). Catalysis depends on Lys877, which acts as the Charge relay system. 906-908 (VLK) contributes to the CoA binding site. The Charge relay system role is filled by Asp953. 1048 to 1049 (AH) is a binding site for CoA. Residue His1049 is the Proton donor of the active site. NADP(+) is bound at residue 1053–1054 (NR).

It belongs to the HMG-CoA reductase family.

It localises to the endoplasmic reticulum membrane. It catalyses the reaction (R)-mevalonate + 2 NADP(+) + CoA = (3S)-3-hydroxy-3-methylglutaryl-CoA + 2 NADPH + 2 H(+). It participates in metabolic intermediate biosynthesis; (R)-mevalonate biosynthesis; (R)-mevalonate from acetyl-CoA: step 3/3. Functionally, HMG-CoA reductase; part of the first module of ergosterol biosynthesis pathway that includes the early steps of the pathway, conserved across all eukaryotes, and which results in the formation of mevalonate from acetyl-coenzyme A (acetyl-CoA). Hmg1 and hmg2 catalyze the reduction of hydroxymethylglutaryl-CoA (HMG-CoA) to mevalonate. The first module starts with the action of the cytosolic acetyl-CoA acetyltransferase erg10B that catalyzes the formation of acetoacetyl-CoA. The hydroxymethylglutaryl-CoA synthases erg13A and erg13B then condense acetyl-CoA with acetoacetyl-CoA to form HMG-CoA. The rate-limiting step of the early module is the reduction to mevalonate by the 3-hydroxy-3-methylglutaryl-coenzyme A (HMG-CoA) reductases hmg1 and hmg2. Mevalonate is also a precursor for the extracellular siderophore triacetylfusarinine C (TAFC). The protein is 3-hydroxy-3-methylglutaryl-coenzyme A reductase 2 of Aspergillus fumigatus (strain ATCC MYA-4609 / CBS 101355 / FGSC A1100 / Af293) (Neosartorya fumigata).